The following is a 1179-amino-acid chain: ATP-dependent helicase/deoxyribonuclease subunit B (1179 aa).

This sequence belongs to the helicase family. AddB/RexB type 2 subfamily. Heterodimer of AddA and RexB. The cofactor is Mg(2+).

Its function is as follows. The heterodimer acts as both an ATP-dependent DNA helicase and an ATP-dependent, dual-direction single-stranded exonuclease. Recognizes the chi site generating a DNA molecule suitable for the initiation of homologous recombination. This subunit has 5' -&gt; 3' nuclease activity but not helicase activity. This Lactobacillus delbrueckii subsp. bulgaricus (strain ATCC BAA-365 / Lb-18) protein is ATP-dependent helicase/deoxyribonuclease subunit B.